A 469-amino-acid polypeptide reads, in one-letter code: RuvB-like helicase 2 (469 aa).

74-81 (GPPSTGKT) contributes to the ATP binding site.

The protein belongs to the RuvB family. As to quaternary structure, may form heterododecamers with RVB1. Component of the SWR1 chromatin remodeling complex, the INO80 chromatin remodeling complex, and of the R2TP complex.

Its subcellular location is the nucleus. The catalysed reaction is ATP + H2O = ADP + phosphate + H(+). DNA helicase which participates in several chromatin remodeling complexes, including the SWR1 and the INO80 complexes. The SWR1 complex mediates the ATP-dependent exchange of histone H2A for the H2A variant HZT1 leading to transcriptional regulation of selected genes by chromatin remodeling. The INO80 complex remodels chromatin by shifting nucleosomes and is involved in DNA repair. Also involved in pre-rRNA processing. The protein is RuvB-like helicase 2 (RVB2) of Eremothecium gossypii (strain ATCC 10895 / CBS 109.51 / FGSC 9923 / NRRL Y-1056) (Yeast).